Here is a 996-residue protein sequence, read N- to C-terminus: Filament-like plant protein 5 (996 aa).

A disordered region spans residues 1-20 (MEGRGWPWKRKSSDKATTEK). Coiled coils occupy residues 59–94 (THMS…TKES), 133–248 (TAED…KYDL), 280–301 (VKKI…RKKL), and 359–387 (LTRR…LQVS). Disordered regions lie at residues 409–482 (NNDK…SSSR) and 496–534 (VGSD…DEDT). Low complexity predominate over residues 417 to 428 (SNSRNLSESLSS). The segment covering 471–482 (VNGSSKPRSSSR) has biased composition (polar residues). The segment covering 503–527 (ANSASKSSNSVCSRRSVEKQSSSKS) has biased composition (low complexity). Coiled-coil stretches lie at residues 601–622 (QNSE…VANI), 737–841 (DSSC…FTTE), and 876–906 (NQEK…QSLQ). The segment at 962 to 996 (IMKSSSVSSSSKEDNEKHTRGLGRFFSSKSKNSAR) is disordered.

This sequence belongs to the FPP family. Interacts with WPP/MAF proteins.

The chain is Filament-like plant protein 5 (FPP5) from Arabidopsis thaliana (Mouse-ear cress).